The chain runs to 127 residues: Aspartate 1-decarboxylase (127 aa).

Residue Ser-25 is the Schiff-base intermediate with substrate; via pyruvic acid of the active site. A Pyruvic acid (Ser) modification is found at Ser-25. Thr-57 is a substrate binding site. The Proton donor role is filled by Tyr-58. 73–75 (GAA) contributes to the substrate binding site.

This sequence belongs to the PanD family. Heterooctamer of four alpha and four beta subunits. The cofactor is pyruvate. Post-translationally, is synthesized initially as an inactive proenzyme, which is activated by self-cleavage at a specific serine bond to produce a beta-subunit with a hydroxyl group at its C-terminus and an alpha-subunit with a pyruvoyl group at its N-terminus.

It is found in the cytoplasm. The catalysed reaction is L-aspartate + H(+) = beta-alanine + CO2. It functions in the pathway cofactor biosynthesis; (R)-pantothenate biosynthesis; beta-alanine from L-aspartate: step 1/1. Functionally, catalyzes the pyruvoyl-dependent decarboxylation of aspartate to produce beta-alanine. In Listeria welshimeri serovar 6b (strain ATCC 35897 / DSM 20650 / CCUG 15529 / CIP 8149 / NCTC 11857 / SLCC 5334 / V8), this protein is Aspartate 1-decarboxylase.